The sequence spans 435 residues: 4-hydroxy-3-methylbut-2-en-1-yl diphosphate synthase (flavodoxin) (435 aa).

Over residues 1 to 15 (MTDVDLRARPQEGMK) the composition is skewed to basic and acidic residues. The segment at 1–24 (MTDVDLRARPQEGMKEIPAGPKGR) is disordered. Positions 316, 319, 362, and 369 each coordinate [4Fe-4S] cluster.

The protein belongs to the IspG family. Requires [4Fe-4S] cluster as cofactor.

It carries out the reaction (2E)-4-hydroxy-3-methylbut-2-enyl diphosphate + oxidized [flavodoxin] + H2O + 2 H(+) = 2-C-methyl-D-erythritol 2,4-cyclic diphosphate + reduced [flavodoxin]. It functions in the pathway isoprenoid biosynthesis; isopentenyl diphosphate biosynthesis via DXP pathway; isopentenyl diphosphate from 1-deoxy-D-xylulose 5-phosphate: step 5/6. Its function is as follows. Converts 2C-methyl-D-erythritol 2,4-cyclodiphosphate (ME-2,4cPP) into 1-hydroxy-2-methyl-2-(E)-butenyl 4-diphosphate. In Afipia carboxidovorans (strain ATCC 49405 / DSM 1227 / KCTC 32145 / OM5) (Oligotropha carboxidovorans), this protein is 4-hydroxy-3-methylbut-2-en-1-yl diphosphate synthase (flavodoxin).